We begin with the raw amino-acid sequence, 193 residues long: 3-isopropylmalate dehydratase small subunit (193 aa).

It belongs to the LeuD family. LeuD type 1 subfamily. Heterodimer of LeuC and LeuD.

The catalysed reaction is (2R,3S)-3-isopropylmalate = (2S)-2-isopropylmalate. It functions in the pathway amino-acid biosynthesis; L-leucine biosynthesis; L-leucine from 3-methyl-2-oxobutanoate: step 2/4. Catalyzes the isomerization between 2-isopropylmalate and 3-isopropylmalate, via the formation of 2-isopropylmaleate. The polypeptide is 3-isopropylmalate dehydratase small subunit (Bacillus cereus (strain ATCC 10987 / NRS 248)).